The chain runs to 727 residues: Prolyl endopeptidase-like (727 aa).

Active-site charge relay system residues include Ser-559, Asp-645, and His-690.

This sequence belongs to the peptidase S9A family. Homodimer. Interacts with the AP-1 complex.

It is found in the cytoplasm. The protein localises to the cytosol. The protein resides in the golgi apparatus. Its subcellular location is the trans-Golgi network. It localises to the cytoskeleton. It is found in the nucleus. Its function is as follows. Serine peptidase whose precise substrate specificity remains unclear. Does not cleave peptides after a arginine or lysine residue. Regulates trans-Golgi network morphology and sorting by regulating the membrane binding of the AP-1 complex. May play a role in the regulation of synaptic vesicle exocytosis. The polypeptide is Prolyl endopeptidase-like (PREPL) (Pongo abelii (Sumatran orangutan)).